Consider the following 328-residue polypeptide: Renalase (328 aa).

FAD contacts are provided by residues Ala13, 32–33 (DK), Arg40, and 56–57 (QY). Residues 57-61 (YFTAR) and 96-98 (SPD) contribute to the substrate site. Ile128 contacts FAD. Thr185 contacts substrate. Asp302 contacts FAD. Arg308 serves as a coordination point for substrate. Residue Val309 coordinates FAD.

It belongs to the bacterial renalase family. Requires FAD as cofactor.

The enzyme catalyses 1,2-dihydro-beta-NAD + O2 + H(+) = H2O2 + NAD(+). It carries out the reaction 1,2-dihydro-beta-NADP + O2 + H(+) = H2O2 + NADP(+). The catalysed reaction is 1,6-dihydro-beta-NADP + O2 + H(+) = H2O2 + NADP(+). It catalyses the reaction 1,6-dihydro-beta-NAD + O2 + H(+) = H2O2 + NAD(+). Its function is as follows. Catalyzes the oxidation of the 1,2-dihydro- and 1,6-dihydro- isomeric forms of beta-NAD(P) back to beta-NAD(P)+. Has a preference for 1,2-dihydro-beta-NAD as substrate. May serve to protect primary metabolism dehydrogenases from inhibition by the 1,2-dihydro- and 1,6-dihydro-beta-NAD(P) isomers. This Pseudomonas syringae pv. tomato (strain ATCC BAA-871 / DC3000) protein is Renalase.